The chain runs to 125 residues: Small ribosomal subunit protein eS8 (125 aa).

Residues 1–34 are disordered; that stretch reads MQWQGRSVRKSTGGRYSPSRGKRRREIGSAPAET.

This sequence belongs to the eukaryotic ribosomal protein eS8 family. In terms of assembly, part of the 30S ribosomal subunit.

In Methanospirillum hungatei JF-1 (strain ATCC 27890 / DSM 864 / NBRC 100397 / JF-1), this protein is Small ribosomal subunit protein eS8.